Consider the following 106-residue polypeptide: Toxin-like structure LSTX-D4 (106 aa).

An N-terminal signal peptide occupies residues 1–20 (MMKVLVVVALLVTLISYSSS). Residues 21–41 (EGIGDLEADELLSLMANEQTR) constitute a propeptide that is removed on maturation. Intrachain disulfides connect Cys45–Cys60, Cys52–Cys69, Cys59–Cys85, and Cys71–Cys83.

Belongs to the neurotoxin 19 (CSTX) family. 02 (D7) subfamily. As to expression, expressed by the venom gland.

The protein localises to the secreted. The chain is Toxin-like structure LSTX-D4 from Lycosa singoriensis (Wolf spider).